Reading from the N-terminus, the 275-residue chain is Ribosomal RNA small subunit methyltransferase A (275 aa).

Residues N19, L21, G46, E71, D94, and N117 each coordinate S-adenosyl-L-methionine.

Belongs to the class I-like SAM-binding methyltransferase superfamily. rRNA adenine N(6)-methyltransferase family. RsmA subfamily.

It is found in the cytoplasm. It catalyses the reaction adenosine(1518)/adenosine(1519) in 16S rRNA + 4 S-adenosyl-L-methionine = N(6)-dimethyladenosine(1518)/N(6)-dimethyladenosine(1519) in 16S rRNA + 4 S-adenosyl-L-homocysteine + 4 H(+). In terms of biological role, specifically dimethylates two adjacent adenosines (A1518 and A1519) in the loop of a conserved hairpin near the 3'-end of 16S rRNA in the 30S particle. May play a critical role in biogenesis of 30S subunits. The protein is Ribosomal RNA small subunit methyltransferase A of Burkholderia thailandensis (strain ATCC 700388 / DSM 13276 / CCUG 48851 / CIP 106301 / E264).